A 72-amino-acid polypeptide reads, in one-letter code: Delta-actitoxin-Avd2b 1 (72 aa).

An N-terminal signal peptide occupies residues 1-21 (MMNRLLVFLMLGAAFMLVVSA). A propeptide spanning residues 22-42 (NDAYGDEPAFKDLNQGDESLG) is cleaved from the precursor. 3 disulfides stabilise this stretch: Cys-47–Cys-62, Cys-48–Cys-56, and Cys-50–Cys-67.

This sequence belongs to the sea anemone short toxin (type III) family.

Its subcellular location is the secreted. The protein localises to the nematocyst. Functionally, voltage-gated sodium channel (Nav) inhibitor. 1 uM completely inhibits insect voltage-gated sodium channel inactivation (DmNav1 from D.melanogaster). The polypeptide is Delta-actitoxin-Avd2b 1 (Anemonia viridis (Snakelocks anemone)).